We begin with the raw amino-acid sequence, 90 residues long: Small ribosomal subunit protein uS15 (90 aa).

The protein belongs to the universal ribosomal protein uS15 family. As to quaternary structure, part of the 30S ribosomal subunit. Forms a bridge to the 50S subunit in the 70S ribosome, contacting the 23S rRNA.

Its function is as follows. One of the primary rRNA binding proteins, it binds directly to 16S rRNA where it helps nucleate assembly of the platform of the 30S subunit by binding and bridging several RNA helices of the 16S rRNA. Functionally, forms an intersubunit bridge (bridge B4) with the 23S rRNA of the 50S subunit in the ribosome. The chain is Small ribosomal subunit protein uS15 from Campylobacter hominis (strain ATCC BAA-381 / DSM 21671 / CCUG 45161 / LMG 19568 / NCTC 13146 / CH001A).